A 143-amino-acid chain; its full sequence is MFMGEYRHNVDEKGRMIIPAKFREELGETFVVTRGLDRCLFVYPQVEWKKLEESLKNLPFTKKDARAFTRFFFSGATECELDKQGRVNIASPLREFAQLKKECVVIGVSNRVEIWSKELWEEYFAESEESFSEIAENIVDFDL.

2 consecutive SpoVT-AbrB domains span residues 5–47 and 76–119; these read EYRH…PQVE and ATEC…SKEL.

It belongs to the MraZ family. Forms oligomers.

The protein localises to the cytoplasm. Its subcellular location is the nucleoid. The polypeptide is Transcriptional regulator MraZ (Halalkalibacterium halodurans (strain ATCC BAA-125 / DSM 18197 / FERM 7344 / JCM 9153 / C-125) (Bacillus halodurans)).